The primary structure comprises 636 residues: 1-deoxy-D-xylulose-5-phosphate synthase (636 aa).

Thiamine diphosphate is bound by residues H74 and 115-117 (GHA). Mg(2+) is bound at residue D146. Residues 147–148 (GA), N175, Y285, and E368 each bind thiamine diphosphate. N175 contributes to the Mg(2+) binding site.

Belongs to the transketolase family. DXPS subfamily. Homodimer. It depends on Mg(2+) as a cofactor. The cofactor is thiamine diphosphate.

The catalysed reaction is D-glyceraldehyde 3-phosphate + pyruvate + H(+) = 1-deoxy-D-xylulose 5-phosphate + CO2. Its pathway is metabolic intermediate biosynthesis; 1-deoxy-D-xylulose 5-phosphate biosynthesis; 1-deoxy-D-xylulose 5-phosphate from D-glyceraldehyde 3-phosphate and pyruvate: step 1/1. Catalyzes the acyloin condensation reaction between C atoms 2 and 3 of pyruvate and glyceraldehyde 3-phosphate to yield 1-deoxy-D-xylulose-5-phosphate (DXP). The polypeptide is 1-deoxy-D-xylulose-5-phosphate synthase (Anaeromyxobacter sp. (strain K)).